The chain runs to 344 residues: uncharacterized protein (344 aa).

The Cytoplasmic segment spans residues 1–98; that stretch reads MIDFVKSRDT…NNDEIGIWNY (98 aa). Residues 99–119 traverse the membrane as a helical segment; sequence ISVAEMGGVLLFLSYWIWTCL. Residue His-120 is a topological domain, lumenal. Residues 121-141 form a helical membrane-spanning segment; it reads FSKIIFPAQKVICLYIFLFAL. Topologically, residues 142–169 are cytoplasmic; sequence NQTLQECIEEYVFSSECIKYRQFYSVYE. Residues 170-192 form a helical membrane-spanning segment; the sequence is IIDFLRTNFYRLFVIYCALGFGI. The Lumenal portion of the chain corresponds to 193–198; the sequence is TRTVPK. Residues 199–219 form a helical membrane-spanning segment; sequence YLMIKGISIVIALCSVYWISL. The Cytoplasmic segment spans residues 220–222; that stretch reads YKD. A helical transmembrane segment spans residues 223–243; that stretch reads VYVVSEIFDMIQYEVFPAIWV. Residues 244–273 are Lumenal-facing; sequence YSICHLLKQCTSVTTYENASKARFFRRMLN. The chain crosses the membrane as a helical span at residues 274 to 294; that stretch reads AFIFIFCASPMLHYLSNIIFG. The Cytoplasmic portion of the chain corresponds to 295 to 344; the sequence is NFDYRLSVIIGDLFTFMEKIAFPCYIMFPTHNEALAYNRNVAEEAQEKMI.

Its subcellular location is the endoplasmic reticulum membrane. This is an uncharacterized protein from Schizosaccharomyces pombe (strain 972 / ATCC 24843) (Fission yeast).